Consider the following 359-residue polypeptide: 4-galactosyl-N-acetylglucosaminide 3-alpha-L-fucosyltransferase FUT6 (359 aa).

Over 1–14 the chain is Cytoplasmic; sequence MDPLGPAKTQWSWR. The chain crosses the membrane as a helical; Signal-anchor for type II membrane protein span at residues 15-34; the sequence is CCLTALLFQLLVAVCFFSYL. The Lumenal portion of the chain corresponds to 35–359; sequence RVSRDDPTVY…QTRSIAAWFT (325 aa). Residues 73–112 are determines site-specific fucosylation; sequence KPIALPRCSEMVPGTADCNITADRKVYPQADAVIVHHREV. N-linked (GlcNAc...) asparagine glycosylation is found at asparagine 91, asparagine 153, and asparagine 184.

Belongs to the glycosyltransferase 10 family. Homodimer and monomer. Monomer (secreted form). N-glycosylated. In terms of processing, proteolytic cleavage releases a secreted glycoform of 43 kDa.

It localises to the golgi apparatus. The protein resides in the golgi stack membrane. It is found in the secreted. It catalyses the reaction a beta-D-galactosyl-(1-&gt;4)-N-acetyl-beta-D-glucosaminyl derivative + GDP-beta-L-fucose = a beta-D-galactosyl-(1-&gt;4)-[alpha-L-fucosyl-(1-&gt;3)]-N-acetyl-beta-D-glucosaminyl derivative + GDP + H(+). The enzyme catalyses an N-acetyl-alpha-neuraminyl-(2-&gt;3)-beta-D-galactosyl-(1-&gt;4)-N-acetyl-beta-D-glucosaminyl derivative + GDP-beta-L-fucose = an alpha-Neu5Ac-(2-&gt;3)-beta-D-Gal-(1-&gt;4)-[alpha-L-Fuc-(1-&gt;3)]-beta-D-GlcNAc derivative + GDP + H(+). It carries out the reaction an alpha-Neu5Ac-(2-&gt;3)-beta-D-Gal-(1-&gt;4)-beta-D-GlcNAc-(1-&gt;3)-beta-D-Gal-(1-&gt;4)-[alpha-L-Fuc-(1-&gt;3)]-beta-D-GlcNAc derivative + GDP-beta-L-fucose = an alpha-Neu5Ac-(2-&gt;3)-beta-D-Gal-(1-&gt;4)-[alpha-L-Fuc-(1-&gt;3)]-beta-D-GlcNAc-(1-&gt;3)-beta-D-Gal-(1-&gt;4)-[alpha-L-Fuc-(1-&gt;3)]-beta-D-GlcNAc derivative + GDP + H(+). The catalysed reaction is a neolactoside nLc6Cer + GDP-beta-L-fucose = beta-D-Gal-(1-&gt;4)-[alpha-L-Fuc-(1-&gt;3)]-beta-D-GlcNAc-(1-&gt;3)-beta-D-Gal-(1-&gt;4)-beta-D-GlcNAc-(1-&gt;3)-beta-D-Gal-(1-&gt;4)-beta-D-Glc-(1&lt;-&gt;1')-Cer + GDP + H(+). It catalyses the reaction a neolactoside nLc6Cer + GDP-beta-L-fucose = beta-D-galactosyl-(1-&gt;4)-N-acetyl-beta-D-glucosaminyl-(1-&gt;3)-beta-D-galactosyl-(1-&gt;4)-[alpha-L-fucosyl-(1-&gt;3)]-N-acetyl-beta-D-glucosaminyl-(1-&gt;3)-beta-D-galactosyl-(1-&gt;4)-beta-D-glucosyl-(1&lt;-&gt;1')-ceramide + GDP + H(+). The enzyme catalyses a neolactoside VI(3)-alpha-NeuNAc-nLc6Cer + GDP-beta-L-fucose = a neolactoside VI(3)-alpha-NeuAc,V(3)-alphaFuc-nLc6Cer + GDP + H(+). It carries out the reaction beta-D-galactosyl-(1-&gt;4)-N-acetyl-D-glucosamine + GDP-beta-L-fucose = beta-D-galactosyl-(1-&gt;4)-[alpha-L-fucosyl-(1-&gt;3)]-N-acetyl-D-glucosamine + GDP + H(+). The catalysed reaction is N-acetyl-alpha-neuraminosyl-(2-&gt;3)-beta-D-galactosyl-(1-&gt;4)-N-acetyl-beta-D-glucosamine + GDP-beta-L-fucose = N-acetyl-alpha-neuraminosyl-(2-&gt;3)-beta-D-galactosyl-(1-&gt;4)-[alpha-L-fucosyl-(1-&gt;3)]-N-acetyl-beta-D-glucosamine + GDP + H(+). It catalyses the reaction lactose + GDP-beta-L-fucose = beta-D-galactosyl-(1-&gt;4)-[alpha-L-fucosyl-(1-&gt;3)]-D-glucose + GDP + H(+). The enzyme catalyses alpha-L-Fuc-(1-&gt;2)-beta-D-Gal-(1-&gt;4)-D-Glc + GDP-beta-L-fucose = alpha-L-Fuc-(1-&gt;2)-beta-D-Gal-(1-&gt;4)-[alpha-L-Fuc-(1-&gt;3)]-D-Glc + GDP + H(+). It carries out the reaction a beta-D-galactosyl-(1-&gt;4)-N-acetyl-beta-D-6-sulfooxy-glucosaminyl derivative + GDP-beta-L-fucose = a beta-D-galactosyl-(1-&gt;4)-[alpha-L-fucosyl-(1-&gt;3)]-N-acetyl-beta-D-6-sulfooxy-glucosaminyl derivative + GDP + H(+). The protein operates within protein modification; protein glycosylation. Catalyzes the transfer of L-fucose, from a guanosine diphosphate-beta-L-fucose, to the N-acetyl glucosamine (GlcNAc) of a distal alpha2,3 sialylated lactosamine unit of a glycoprotein- or glycolipid-linked sialopolylactosamines chain or of a distal or internal lactosamine unit of a neutral glycoprotein- or glycolipid-linked polylactosamines chain through an alpha-1,3 glycosidic linkage and participates in surface expression of the sialyl Lewis X (sLe(x)), Lewis X (Le(x)) and non sialylated VIM2 determinants. Moreover transfers fucose to H-type 2 (Fucalpha1-2Galbeta1-4GlcNAc) chain acceptor substrates and participates in difucosylated sialyl Lewis x determinants. Also fucosylates a polylactosamine substrate having a 6 sulfate modification at the GlcNAc moiety and gives rise to sialyl and non-sialyl 6-sulfo lewis X. Does not have activity towards type 1 ((Galbeta1-3GlcNAc)) and H-type 1 chain (Fucalpha1-2Galbeta1-3GlcNAc) acceptors substrates. The sequence is that of 4-galactosyl-N-acetylglucosaminide 3-alpha-L-fucosyltransferase FUT6 from Pongo pygmaeus (Bornean orangutan).